Here is a 371-residue protein sequence, read N- to C-terminus: Probable dual-specificity RNA methyltransferase RlmN (371 aa).

Glu-113 functions as the Proton acceptor in the catalytic mechanism. Residues 119 to 352 enclose the Radical SAM core domain; sequence QSWGNSVCVT…TTVRREMGGE (234 aa). Cys-126 and Cys-357 are joined by a disulfide. [4Fe-4S] cluster contacts are provided by Cys-133, Cys-137, and Cys-140. S-adenosyl-L-methionine is bound by residues 182–183, Ser-214, 237–239, and Asn-313; these read GE and SLH. Catalysis depends on Cys-357, which acts as the S-methylcysteine intermediate.

The protein belongs to the radical SAM superfamily. RlmN family. The cofactor is [4Fe-4S] cluster.

The protein localises to the cytoplasm. It catalyses the reaction adenosine(2503) in 23S rRNA + 2 reduced [2Fe-2S]-[ferredoxin] + 2 S-adenosyl-L-methionine = 2-methyladenosine(2503) in 23S rRNA + 5'-deoxyadenosine + L-methionine + 2 oxidized [2Fe-2S]-[ferredoxin] + S-adenosyl-L-homocysteine. The catalysed reaction is adenosine(37) in tRNA + 2 reduced [2Fe-2S]-[ferredoxin] + 2 S-adenosyl-L-methionine = 2-methyladenosine(37) in tRNA + 5'-deoxyadenosine + L-methionine + 2 oxidized [2Fe-2S]-[ferredoxin] + S-adenosyl-L-homocysteine. Specifically methylates position 2 of adenine 2503 in 23S rRNA and position 2 of adenine 37 in tRNAs. The polypeptide is Probable dual-specificity RNA methyltransferase RlmN (Symbiobacterium thermophilum (strain DSM 24528 / JCM 14929 / IAM 14863 / T)).